Reading from the N-terminus, the 272-residue chain is Putative hydro-lyase Rpal_1947 (272 aa).

Belongs to the D-glutamate cyclase family.

The chain is Putative hydro-lyase Rpal_1947 from Rhodopseudomonas palustris (strain TIE-1).